The primary structure comprises 259 residues: Major cell-binding factor (259 aa).

An N-terminal signal peptide occupies residues 1–26; that stretch reads MVFRKSLLKLAVFALGACVAFSNANA.

The protein belongs to the bacterial solute-binding protein 3 family.

The protein resides in the cell surface. Common antigen and a major cell adherence molecule. Most probably involved, with PEB1C, in a binding-protein-dependent transport system for an amino acid. May be involved in binding to intestinal cells. The sequence is that of Major cell-binding factor (peb1A) from Campylobacter jejuni subsp. jejuni serotype O:2 (strain ATCC 700819 / NCTC 11168).